Reading from the N-terminus, the 394-residue chain is MKKKTVRDIDVSGKRVLVRVDFNVPMDENKNITDDRRIREALPTIEYLINHNAKVILVSHLGRPKGKFNPDYSLKPVAKRLSELLKKPVIMAEDVIGEDAKVKAAALKEGEVLLLENVRFHAEEEKNDPEFAKELASLADIYVNDAFGTAHRAHASTAGVAKYLPAVAGFLIEKELSIMGEALENPKRPFVAILGGAKVSDKIGVITNLLEKVDSLLIGGGMAYTFIKAKGYEIGKSLLEEDKIELAKEIMEKAKQKGVNFMLPVDTVIAKELKSGVPYEVVDIDKMPEDQIGVDIGPKTIEEYSKVIKHAMTVVWNGPMGVFEIPEFAKGTKAIAKALSECKGTTIVGGGDSAAAIEQLGYADKVTHISTGGGASLEFLEGKVLPGIDILNDK.

Residues 21–23 (DFN), R37, 60–63 (HLGR), R119, and R152 contribute to the substrate site. ATP is bound by residues K202, G293, E324, and 350–353 (GGDS).

Belongs to the phosphoglycerate kinase family. As to quaternary structure, monomer.

The protein resides in the cytoplasm. The enzyme catalyses (2R)-3-phosphoglycerate + ATP = (2R)-3-phospho-glyceroyl phosphate + ADP. It participates in carbohydrate degradation; glycolysis; pyruvate from D-glyceraldehyde 3-phosphate: step 2/5. This Caldanaerobacter subterraneus subsp. tengcongensis (strain DSM 15242 / JCM 11007 / NBRC 100824 / MB4) (Thermoanaerobacter tengcongensis) protein is Phosphoglycerate kinase.